We begin with the raw amino-acid sequence, 245 residues long: Zinc finger protein AZF1 (245 aa).

Residues 1 to 15 (MALETLNSPTATTTA) are compositionally biased toward polar residues. Disordered regions lie at residues 1–57 (MALE…NKNL) and 112–141 (LGGH…SHSN). Residues 97–119 (YKCTVCGKSFSSYQALGGHKTSH) form a C2H2-type 1 zinc finger. The span at 123–134 (TNTSITSGNQEL) shows a compositional bias: polar residues. Residues 164 to 186 (HTCSICFKSFASGQALGGHKRCH) form a C2H2-type 2 zinc finger. The disordered stretch occupies residues 193-231 (GNGNGSSSNSVELVAGSDVSDVDNERWSEESAIGGHRGF).

Highly expressed in roots and at lower levels in leaves and stems.

The protein resides in the nucleus. Functionally, transcriptional repressor involved in the inhibition of plant growth under abiotic stress conditions. Can repress the expression of various genes, including osmotic stress and abscisic acid-repressive genes and auxin-inducible genes, by binding to their promoter regions in a DNA sequence-specific manner. This Arabidopsis thaliana (Mouse-ear cress) protein is Zinc finger protein AZF1 (AZF1).